Reading from the N-terminus, the 237-residue chain is Uridylate kinase (237 aa).

An ATP-binding site is contributed by 11–14; that stretch reads KLSG. Gly-53 is a UMP binding site. ATP contacts are provided by Gly-54 and Arg-58. UMP contacts are provided by residues Asp-73 and 134–141; that span reads TGNPFFTT. ATP contacts are provided by Thr-161, Tyr-167, and Asp-170.

Belongs to the UMP kinase family. Homohexamer.

Its subcellular location is the cytoplasm. It carries out the reaction UMP + ATP = UDP + ADP. It participates in pyrimidine metabolism; CTP biosynthesis via de novo pathway; UDP from UMP (UMPK route): step 1/1. With respect to regulation, inhibited by UTP. Its function is as follows. Catalyzes the reversible phosphorylation of UMP to UDP. The chain is Uridylate kinase from Burkholderia thailandensis (strain ATCC 700388 / DSM 13276 / CCUG 48851 / CIP 106301 / E264).